The sequence spans 142 residues: Crustacean hyperglycemic hormones (142 aa).

The signal sequence occupies residues 1 to 26 (MYSKTIPAMLAIITVAYLCALPHAHA). The residue at position 67 (Q67) is a Pyrrolidone carboxylic acid; partial. 3 cysteine pairs are disulfide-bonded: C73–C109, C89–C105, and C92–C118. Position 138 is a valine amide (V138).

It belongs to the arthropod CHH/MIH/GIH/VIH hormone family. The N-terminus is blocked only in isoform CHH-II but not in isoform CHH-I. As to expression, produced by the medulla terminalis X-organ in the eyestalks and transported to the sinus gland where they are stored and released.

It is found in the secreted. In terms of biological role, hormone found in the sinus gland of isopods and decapods which controls the blood sugar level. Has a secretagogue action over the amylase released from the midgut gland. May act as a stress hormone and may be involved in the control of molting and reproduction. The sequence is that of Crustacean hyperglycemic hormones from Carcinus maenas (Common shore crab).